The sequence spans 174 residues: 2-C-methyl-D-erythritol 2,4-cyclodiphosphate synthase (174 aa).

3 residues coordinate a divalent metal cation: Asp13, His15, and His61. 13–15 (DAH) serves as a coordination point for 4-CDP-2-C-methyl-D-erythritol 2-phosphate. Residues 75–77 (DIG), 149–152 (TTTD), Phe156, and His159 contribute to the 4-CDP-2-C-methyl-D-erythritol 2-phosphate site.

This sequence belongs to the IspF family. In terms of assembly, homotrimer. It depends on a divalent metal cation as a cofactor.

It carries out the reaction 4-CDP-2-C-methyl-D-erythritol 2-phosphate = 2-C-methyl-D-erythritol 2,4-cyclic diphosphate + CMP. Its pathway is isoprenoid biosynthesis; isopentenyl diphosphate biosynthesis via DXP pathway; isopentenyl diphosphate from 1-deoxy-D-xylulose 5-phosphate: step 4/6. Its function is as follows. Involved in the biosynthesis of isopentenyl diphosphate (IPP) and dimethylallyl diphosphate (DMAPP), two major building blocks of isoprenoid compounds. Catalyzes the conversion of 4-diphosphocytidyl-2-C-methyl-D-erythritol 2-phosphate (CDP-ME2P) to 2-C-methyl-D-erythritol 2,4-cyclodiphosphate (ME-CPP) with a corresponding release of cytidine 5-monophosphate (CMP). In Bifidobacterium longum (strain NCC 2705), this protein is 2-C-methyl-D-erythritol 2,4-cyclodiphosphate synthase.